The sequence spans 63 residues: uncharacterized protein (63 aa).

The N-terminal stretch at 1–18 (MLNSEHFNLIQRALDATA) is a signal peptide.

This is an uncharacterized protein from Bacillus subtilis (strain 168).